The sequence spans 320 residues: Cytochrome f (320 aa).

The first 35 residues, 1–35, serve as a signal peptide directing secretion; the sequence is MKLNSLINLIQKSIYSCTLLLIILNIICVAPNSSN. 4 residues coordinate heme: phenylalanine 37, cysteine 57, cysteine 60, and histidine 61. A helical membrane pass occupies residues 286 to 306; it reads IKGMIVFFFASVLAQIFFVLK.

Belongs to the cytochrome f family. In terms of assembly, the 4 large subunits of the cytochrome b6-f complex are cytochrome b6, subunit IV (17 kDa polypeptide, petD), cytochrome f and the Rieske protein, while the 4 small subunits are PetG, PetL, PetM and PetN. The complex functions as a dimer. Heme is required as a cofactor.

It localises to the plastid. The protein localises to the chloroplast thylakoid membrane. Its function is as follows. Component of the cytochrome b6-f complex, which mediates electron transfer between photosystem II (PSII) and photosystem I (PSI), cyclic electron flow around PSI, and state transitions. This is Cytochrome f from Pyropia yezoensis (Susabi-nori).